We begin with the raw amino-acid sequence, 294 residues long: 2-oxoglutaramate amidase (294 aa).

One can recognise a CN hydrolase domain in the interval 16 to 261 (LDVAAVQVKF…EAVLRATLNF (246 aa)). The active-site Proton acceptor is E55. Residue K129 is the Proton donor of the active site. The Nucleophile role is filled by C168.

This sequence belongs to the carbon-nitrogen hydrolase superfamily. NIT1/NIT2 family.

The enzyme catalyses 2-oxoglutaramate + H2O = 2-oxoglutarate + NH4(+). It functions in the pathway alkaloid degradation; nicotine degradation. Functionally, catalyzes the conversion of 2-oxoglutaramate to 2-oxoglutarate. Together with glutamate dehydrogenase, may form a physiologically relevant enzyme couple, leading to transformation of metabolically inert 2-oxoglutaramate derived from trihydroxypyridine into glutamate, a central compound of nitrogen metabolism. In Paenarthrobacter nicotinovorans (Arthrobacter nicotinovorans), this protein is 2-oxoglutaramate amidase.